The chain runs to 538 residues: Chaperonin GroEL 1 (538 aa).

Residues 29–32 (TLGP), 86–90 (DGTTT), Gly413, 478–480 (NAA), and Asp494 contribute to the ATP site.

This sequence belongs to the chaperonin (HSP60) family. As to quaternary structure, forms a cylinder of 14 subunits composed of two heptameric rings stacked back-to-back. Interacts with the co-chaperonin GroES.

The protein resides in the cytoplasm. The catalysed reaction is ATP + H2O + a folded polypeptide = ADP + phosphate + an unfolded polypeptide.. Together with its co-chaperonin GroES, plays an essential role in assisting protein folding. The GroEL-GroES system forms a nano-cage that allows encapsulation of the non-native substrate proteins and provides a physical environment optimized to promote and accelerate protein folding. The polypeptide is Chaperonin GroEL 1 (Corynebacterium glutamicum (strain R)).